The primary structure comprises 304 residues: ATP synthase gamma chain (304 aa).

It belongs to the ATPase gamma chain family. In terms of assembly, F-type ATPases have 2 components, CF(1) - the catalytic core - and CF(0) - the membrane proton channel. CF(1) has five subunits: alpha(3), beta(3), gamma(1), delta(1), epsilon(1). CF(0) has three main subunits: a, b and c.

Its subcellular location is the cell membrane. Produces ATP from ADP in the presence of a proton gradient across the membrane. The gamma chain is believed to be important in regulating ATPase activity and the flow of protons through the CF(0) complex. The polypeptide is ATP synthase gamma chain (Mycobacterium ulcerans (strain Agy99)).